The chain runs to 337 residues: G-protein coupled receptor 26 (337 aa).

The Extracellular segment spans residues 1–10; sequence MNSWDAGLAG. A helical transmembrane segment spans residues 11-31; sequence LLVGTMGVSLLSNALVLLCLL. Over 32–47 the chain is Cytoplasmic; it reads HSADIRRQAPALFTLN. Residues 48–68 form a helical membrane-spanning segment; sequence LTCGNLLCTVVNMPLTLAGVV. At 69–81 the chain is on the extracellular side; it reads AQRQPAGDRLCRL. Cysteine 79 and cysteine 156 are joined by a disulfide. The helical transmembrane segment at 82 to 102 threads the bilayer; sequence AAFLDTFLAANSMLSMAALSI. Residues 103–123 lie on the Cytoplasmic side of the membrane; that stretch reads DRWVAVVFPLSYRAKMRLRDA. Residues 124 to 144 form a helical membrane-spanning segment; sequence ALMVAYTWLHALTFPAAALAL. At 145–168 the chain is on the extracellular side; the sequence is SWLGFHQLYASCTLCSRRPDERLR. A helical membrane pass occupies residues 169–189; the sequence is FAVFTGAFHALSFLLSFVVLC. The Cytoplasmic portion of the chain corresponds to 190–245; it reads CTYLKVLKVARFHCKRIDVITMQTLVLLVDLHPSVRERCLEEQKRRRQRATKKIST. A helical membrane pass occupies residues 246–266; the sequence is FIGTFLVCFAPYVITRLVELF. Residues 267 to 276 are Extracellular-facing; it reads STVPIGSHWG. A helical membrane pass occupies residues 277–297; that stretch reads VLSKCLAYSKAASDPFVYSLL. The Cytoplasmic portion of the chain corresponds to 298–337; sequence RHQYRKSCKEILNRLLHRRSIHSSGLTGDSHSQNILPVSE.

The protein belongs to the G-protein coupled receptor 1 family. As to expression, highly expressed in the CNS, the highest expression is seen in the amygdala, hippocampus and thalamus. Weak expression is detected in testis. Down-regulated in glioblastoma.

Its subcellular location is the cell membrane. Its function is as follows. Orphan receptor. Displays a significant level of constitutive activity. Its effect is mediated by G(s)-alpha protein that stimulate adenylate cyclase, resulting in an elevation of intracellular cAMP. This Homo sapiens (Human) protein is G-protein coupled receptor 26 (GPR26).